The chain runs to 572 residues: NADH-ubiquinone oxidoreductase chain 5 (572 aa).

16 helical membrane-spanning segments follow: residues 4–24 (ISFV…LYFL), 44–64 (IVMT…VLMI), 86–106 (IMLV…PNLI), 107–127 (SILL…IYFQ), 147–167 (VALL…YIFY), 170–190 (IMQN…AAMT), 217–237 (SSTL…ILST), 239–259 (WLGQ…GLGA), 268–288 (IIAL…SMGF), 294–314 (FHLL…GAII), 337–357 (SACF…AGFY), 372–394 (NMFS…FRLV), 422–442 (MGLL…IFPF), 457–477 (LFVC…NLFF), 490–510 (FLGS…FYPL), and 552–572 (LKIY…LLFL).

Belongs to the complex I subunit 5 family.

It localises to the mitochondrion inner membrane. The catalysed reaction is a ubiquinone + NADH + 5 H(+)(in) = a ubiquinol + NAD(+) + 4 H(+)(out). Functionally, core subunit of the mitochondrial membrane respiratory chain NADH dehydrogenase (Complex I) that is believed to belong to the minimal assembly required for catalysis. Complex I functions in the transfer of electrons from NADH to the respiratory chain. The immediate electron acceptor for the enzyme is believed to be ubiquinone. This Drosophila melanogaster (Fruit fly) protein is NADH-ubiquinone oxidoreductase chain 5 (mt:ND5).